Consider the following 156-residue polypeptide: Small ribosomal subunit protein uS7 (156 aa).

It belongs to the universal ribosomal protein uS7 family. In terms of assembly, part of the 30S ribosomal subunit. Contacts proteins S9 and S11.

In terms of biological role, one of the primary rRNA binding proteins, it binds directly to 16S rRNA where it nucleates assembly of the head domain of the 30S subunit. Is located at the subunit interface close to the decoding center, probably blocks exit of the E-site tRNA. The chain is Small ribosomal subunit protein uS7 from Latilactobacillus sakei subsp. sakei (strain 23K) (Lactobacillus sakei subsp. sakei).